Consider the following 515-residue polypeptide: 2-isopropylmalate synthase (515 aa).

Positions 4–264 (VKIFDTTLRD…NIGINQDTTQ (261 aa)) constitute a Pyruvate carboxyltransferase domain. Aspartate 13, histidine 201, histidine 203, and asparagine 237 together coordinate Mn(2+). Positions 390 to 515 (ELDYLSVNTG…RQTTSAQEGI (126 aa)) are regulatory domain.

It belongs to the alpha-IPM synthase/homocitrate synthase family. LeuA type 1 subfamily. Homodimer. It depends on Mn(2+) as a cofactor.

It is found in the cytoplasm. The catalysed reaction is 3-methyl-2-oxobutanoate + acetyl-CoA + H2O = (2S)-2-isopropylmalate + CoA + H(+). It participates in amino-acid biosynthesis; L-leucine biosynthesis; L-leucine from 3-methyl-2-oxobutanoate: step 1/4. Functionally, catalyzes the condensation of the acetyl group of acetyl-CoA with 3-methyl-2-oxobutanoate (2-ketoisovalerate) to form 3-carboxy-3-hydroxy-4-methylpentanoate (2-isopropylmalate). This is 2-isopropylmalate synthase from Halothermothrix orenii (strain H 168 / OCM 544 / DSM 9562).